The following is a 259-amino-acid chain: tRNA pseudouridine synthase A (259 aa).

Catalysis depends on Asp51, which acts as the Nucleophile. Tyr109 contributes to the substrate binding site.

Belongs to the tRNA pseudouridine synthase TruA family. Homodimer.

The catalysed reaction is uridine(38/39/40) in tRNA = pseudouridine(38/39/40) in tRNA. Formation of pseudouridine at positions 38, 39 and 40 in the anticodon stem and loop of transfer RNAs. The chain is tRNA pseudouridine synthase A from Colwellia psychrerythraea (strain 34H / ATCC BAA-681) (Vibrio psychroerythus).